The chain runs to 150 residues: Helix-loop-helix protein hlh-12 (150 aa).

The interval 1–24 (MAKKPRVTKLNTDRRSRANERERQ) is disordered. Positions 11–24 (NTDRRSRANERERQ) are enriched in basic and acidic residues. The basic motif stretch occupies residues 13–26 (DRRSRANERERQRV). The 53-residue stretch at 13 to 65 (DRRSRANERERQRVSEMNGMFDVLLNLLPPSHFKTRLSRVQILREATSYIIRL) folds into the bHLH domain. The tract at residues 27–65 (SEMNGMFDVLLNLLPPSHFKTRLSRVQILREATSYIIRL) is helix-loop-helix motif.

In terms of assembly, forms a heterodimer with helix-loop-helix protein hlh-2.

The protein localises to the nucleus. Transcription factor which binds the E box motif 5'-GCAGGTG-3'. Involved in migration of the gonadal leader cells; distal tip cells (DTCs) in hermaphrodites, and linker cells in males. Positively regulates expression of alpha integrin ina-1 and ADAMTS protease gon-1. The sequence is that of Helix-loop-helix protein hlh-12 from Caenorhabditis elegans.